The sequence spans 146 residues: Small ribosomal subunit protein eS19 (146 aa).

The protein belongs to the eukaryotic ribosomal protein eS19 family.

This Oryza sativa subsp. japonica (Rice) protein is Small ribosomal subunit protein eS19 (RPS19A).